The sequence spans 559 residues: Cytoplasmic polyadenylation element-binding protein 1 (559 aa).

Positions 223–244 (RLDHSSSPLTPPPSATSSGGLS) are disordered. 2 RRM domains span residues 304–401 (CKVF…DAQV) and 423–504 (NTVF…PYLE). Zn(2+)-binding residues include cysteine 508, cysteine 511, cysteine 520, cysteine 525, cysteine 530, cysteine 533, histidine 538, and histidine 546.

The protein belongs to the RRM CPEB family. In terms of assembly, interacts with kinesin, dynein, APLP1, APLP2, TENT2/GLD2 and APP. Both phosphorylated and non phosphorylated forms interact with APLP1. Interacts with TENT4B; the interaction is required for TENT4B-mediated translational control.

Its subcellular location is the cytoplasm. Sequence-specific RNA-binding protein that regulates mRNA cytoplasmic polyadenylation and translation initiation during oocyte maturation and early development. Binds to the cytoplasmic polyadenylation element (CPE), an uridine-rich sequence element (consensus sequence 5'-UUUUUAU-3') within the mRNA 3'-UTR. The sequence is that of Cytoplasmic polyadenylation element-binding protein 1 (cpeb1) from Carassius auratus (Goldfish).